We begin with the raw amino-acid sequence, 425 residues long: Elongation factor 1-alpha (425 aa).

Residues 5-221 (KPHMNLAVIG…DLFKMPDMPT (217 aa)) enclose the tr-type G domain. Residues 14–21 (GHIDHGKS) are G1. 14-21 (GHIDHGKS) contacts GTP. Residue Ser-21 participates in Mg(2+) binding. Positions 70-74 (GITID) are G2. The tract at residues 91 to 94 (DCPG) is G3. Residues 91-95 (DCPGH) and 146-149 (NKMD) contribute to the GTP site. Residues 146 to 149 (NKMD) form a G4 region. Positions 185–187 (SAF) are G5.

Belongs to the TRAFAC class translation factor GTPase superfamily. Classic translation factor GTPase family. EF-Tu/EF-1A subfamily.

The protein localises to the cytoplasm. It carries out the reaction GTP + H2O = GDP + phosphate + H(+). Its function is as follows. GTP hydrolase that promotes the GTP-dependent binding of aminoacyl-tRNA to the A-site of ribosomes during protein biosynthesis. The polypeptide is Elongation factor 1-alpha (Methanocorpusculum labreanum (strain ATCC 43576 / DSM 4855 / Z)).